Here is a 622-residue protein sequence, read N- to C-terminus: Mitochondrial distribution and morphology protein 32 (622 aa).

The N-terminal 70 residues, 1–70 (MLITRLRVPT…RTFPSNDKFT (70 aa)), are a transit peptide targeting the mitochondrion. At 71–123 (TKASNIETILLRKNNEREFKQSLLADAKNFQERFKINLKWILIKNNRPFSLNE) the chain is on the mitochondrial matrix side. A helical transmembrane segment spans residues 124 to 144 (ISIIASWLILSQILWLILSTT). The Mitochondrial intermembrane portion of the chain corresponds to 145–601 (TFISFYLFVI…DWEFKNKNDW (457 aa)). A helical membrane pass occupies residues 602-622 (MKQWGTTFASQLLLFGFGAMV).

It belongs to the MDM31/MDM32 family. Interacts with MDM31. Participates in a complex of about 175 kDa.

The protein localises to the mitochondrion inner membrane. Involved in the organization of the mitochondrial membranes and the global structure of the mitochondria. Also required for mitochondrial distribution and mobility as well as for the maintenance of mitochondrial DNA nucleoids structures. The polypeptide is Mitochondrial distribution and morphology protein 32 (MDM32) (Saccharomyces cerevisiae (strain ATCC 204508 / S288c) (Baker's yeast)).